We begin with the raw amino-acid sequence, 140 residues long: Fatty acid-binding protein 12 (140 aa).

A fatty acid contacts are provided by residues Arg-107 and 127-129; that span reads RTY.

The protein belongs to the calycin superfamily. Fatty-acid binding protein (FABP) family. Expressed in a number of retinoblastoma cell lines.

Its function is as follows. May play a role in lipid transport. This is Fatty acid-binding protein 12 (FABP12) from Homo sapiens (Human).